We begin with the raw amino-acid sequence, 443 residues long: Flavastacin (443 aa).

The first 15 residues, 1 to 15, serve as a signal peptide directing secretion; the sequence is MTRKLLILSGCLILA. Positions 16 to 91 are cleaved as a propeptide — activation peptide; sequence LNSCKSDMET…ANPDISTVER (76 aa). The region spanning 92–289 is the Peptidase M12A domain; it reads STIVSSFIKT…AGINHLYGPV (198 aa). H189 provides a ligand contact to Zn(2+). Residue E190 is part of the active site. Positions 193 and 199 each coordinate Zn(2+). The region spanning 297–440 is the Ricin B-type lectin domain; that stretch reads GTYTLTTSLA…PYTKQRFTLT (144 aa). A glycan (O-linked (Man...) serine) is linked at S355.

The cofactor is Zn(2+). O-linked glycan consists of the Man, GlcNAc, GlcU, Glc, GlcU, Rha, Man heptasaccharide.

The enzyme catalyses Hydrolyzes polypeptides on the amino-side of Asp in -Xaa-|-Asp-. Acts very slowly on -Xaa-|-Glu.. Zinc metallendopeptidase that cleaves preferentially on N-terminal side of aspartate-containing substrates. The polypeptide is Flavastacin (Elizabethkingia meningoseptica (Chryseobacterium meningosepticum)).